The primary structure comprises 178 residues: Large ribosomal subunit protein uL6 (178 aa).

Belongs to the universal ribosomal protein uL6 family. In terms of assembly, part of the 50S ribosomal subunit.

Its function is as follows. This protein binds to the 23S rRNA, and is important in its secondary structure. It is located near the subunit interface in the base of the L7/L12 stalk, and near the tRNA binding site of the peptidyltransferase center. The polypeptide is Large ribosomal subunit protein uL6 (Staphylococcus epidermidis (strain ATCC 35984 / DSM 28319 / BCRC 17069 / CCUG 31568 / BM 3577 / RP62A)).